The chain runs to 57 residues: MANHRGGSGNFAEDRERASEAGKKGGQHSGGNFKNDPQRASEAGKKGGKSSHGKSDN.

The tract at residues 1-57 (MANHRGGSGNFAEDRERASEAGKKGGQHSGGNFKNDPQRASEAGKKGGKSSHGKSDN) is disordered. Basic and acidic residues-rich tracts occupy residues 12–23 (AEDRERASEAGK) and 36–45 (DPQRASEAGK). Basic residues predominate over residues 46 to 57 (KGGKSSHGKSDN).

The protein belongs to the con-10 family.

This is an uncharacterized protein from Escherichia coli (strain K12).